Here is a 212-residue protein sequence, read N- to C-terminus: Ribosome maturation factor RimM (212 aa).

In terms of domain architecture, PRC barrel spans 105-181 (EEEFYYADLI…IDSITAGLDN (77 aa)). Residues 181 to 212 (NAELSGEEDEAEGPESARGSRPRGPKSAGEPR) form a disordered region.

It belongs to the RimM family. Binds ribosomal protein uS19.

Its subcellular location is the cytoplasm. In terms of biological role, an accessory protein needed during the final step in the assembly of 30S ribosomal subunit, possibly for assembly of the head region. Essential for efficient processing of 16S rRNA. May be needed both before and after RbfA during the maturation of 16S rRNA. It has affinity for free ribosomal 30S subunits but not for 70S ribosomes. This Chelativorans sp. (strain BNC1) protein is Ribosome maturation factor RimM.